Here is a 97-residue protein sequence, read N- to C-terminus: Small ribosomal subunit protein bS20 (97 aa).

Belongs to the bacterial ribosomal protein bS20 family.

Its function is as follows. Binds directly to 16S ribosomal RNA. This chain is Small ribosomal subunit protein bS20, found in Prochlorococcus marinus (strain MIT 9301).